The primary structure comprises 373 residues: Extensin-1 (373 aa).

The first 19 residues, 1–19 (MASFLVLAFSLAFVSQTTA), serve as a signal peptide directing secretion. 36 consecutive repeat copies span residues 25 to 33 (SPPPPVKHY), 34 to 40 (SPPPVYK), 41 to 49 (SPPPPVKHY), 50 to 56 (SPPPVYK), 57 to 65 (SPPPPVKHY), 66 to 72 (SPPPVYK), 73 to 81 (SPPPPVKYY), 82 to 88 (SPPPVYK), 97 to 105 (SPPPPVKHY), 106 to 112 (SPPPVYK), 113 to 121 (SPPPPVKHY), 122 to 128 (SPPPVYK), 129 to 137 (SPPPPVKHY), 138 to 144 (SPPPVYK), 145 to 153 (SPPPPVKHY), 154 to 160 (SPPPVYK), 161 to 169 (SPPPPVKYY), 170 to 176 (SPPPVYK), 177 to 185 (SPPPPVKHY), 186 to 192 (SPPPVYK), 193 to 201 (SPPPPVKYY), 202 to 208 (SPPPVYK), 209 to 217 (SPPPPVKHY), 218 to 224 (SPPPVYK), 225 to 233 (SPPPPVKYY), 234 to 240 (SPPPVYK), 241 to 248 (SPPPPVHY), 249 to 256 (SPPPVVYH), 257 to 264 (SPPPPVHY), 265 to 272 (SPPPVVYH), 273 to 280 (SPPPPVHY), 281 to 288 (SPPPVVYH), 289 to 296 (SPPPPVHY), 297 to 304 (SPPPVVYH), 305 to 312 (SPPPPVHY), and 313 to 320 (SPPPVVYH). Residues 25-233 (SPPPPVKHYS…KSPPPPVKYY (209 aa)) are 13 X 9 AA repeats of S-P-P-P-P-V-K-[HY]-Y. The tract at residues 34 to 240 (SPPPVYKSPP…KYYSPPPVYK (207 aa)) is 13 X 7 AA repeats of S-P-P-P-V-Y-K. Residues 241-312 (SPPPPVHYSP…YHSPPPPVHY (72 aa)) form a 5 X 8 AA repeats of S-P-P-P-P-V-H-Y region. Residues 249–320 (SPPPVVYHSP…HYSPPPVVYH (72 aa)) form a 5 X 8 AA repeats of S-P-P-P-V-V-Y-H region. 2 isodityrosine cross-linking regions span residues 329–332 (YEYK) and 363–366 (YLYK). The tract at residues 349–373 (PPPPVHHYSPPHQPYLYKSPPPPHY) is disordered.

The protein belongs to the extensin family. In terms of processing, extensins contain a characteristic repeat of the pentapeptide Ser-Pro(4). For this particular extensin, a typical repeat of Ser-Pro(3) is found. In both cases, the proline residues are hydroxylated and then O-glycosylated (arabinosylation). Synthetised as soluble proteins which become insolubilised in the cell wall through the intermolecular cross-linking of Tyr on adjacent monomers. Isodityrosine (IDT) stabilizes and makes rigid the part of the polypeptide where IDT functional sites are present. Predominantly expressed in the roots. Not detected in the leaves, nor in flowers or flower buds. Wounding reverses this pattern, turning on the gene in the leaves and repressing it in the roots.

It localises to the secreted. The protein localises to the primary cell wall. Structural component which strengthens the primary cell wall. This chain is Extensin-1, found in Arabidopsis thaliana (Mouse-ear cress).